The sequence spans 511 residues: 3-octaprenyl-4-hydroxybenzoate carboxy-lyase (511 aa).

Asn176 is a Mn(2+) binding site. Prenylated FMN-binding positions include 179-181, 193-195, and 198-199; these read IYR, RWL, and RG. Residue Glu242 coordinates Mn(2+). The active-site Proton donor is the Asp311.

Belongs to the UbiD family. In terms of assembly, homohexamer. Requires prenylated FMN as cofactor. Mn(2+) serves as cofactor.

It localises to the cell membrane. It catalyses the reaction a 4-hydroxy-3-(all-trans-polyprenyl)benzoate + H(+) = a 2-(all-trans-polyprenyl)phenol + CO2. It functions in the pathway cofactor biosynthesis; ubiquinone biosynthesis. Catalyzes the decarboxylation of 3-octaprenyl-4-hydroxy benzoate to 2-octaprenylphenol, an intermediate step in ubiquinone biosynthesis. The chain is 3-octaprenyl-4-hydroxybenzoate carboxy-lyase from Laribacter hongkongensis (strain HLHK9).